Reading from the N-terminus, the 140-residue chain is MKMFQSLSLLPRIVSPFRKCYSTDLISLVGVPRVKITKGQNRYLLVNIHTHGFTKYGRVIVRGADVENHLTIFDSILEELEPQGICAKILGGGRILNETDSKKMKIYGTSRTFGSADHTRTRNILQSWTTYKDFKITVKN.

Arginine 42 contributes to the substrate binding site. Histidine 69 acts as the Proton acceptor in catalysis. 110–112 provides a ligand contact to substrate; the sequence is SRT.

This sequence belongs to the janus family.

Its function is as follows. JanA and janB regulate somatic sex differentiation. This Drosophila erecta (Fruit fly) protein is Sex-regulated protein janus-B (janB).